We begin with the raw amino-acid sequence, 301 residues long: Heme A synthase (301 aa).

Topologically, residues 1-7 are cytoplasmic; that stretch reads MHKGLKR. Residues 8 to 28 form a helical membrane-spanning segment; sequence LGVITSLGVLLVLIQGALVTN. Over 29–56 the chain is Extracellular; sequence TGSGEGCGQTWPLCFGQVIPLDPPPETV. Cysteine 35 and cysteine 42 are oxidised to a cystine. A helical transmembrane segment spans residues 57–77; it reads IEFSHRLVAGIVGMLVILMAI. Glutamate 58 is a catalytic residue. Heme o is bound at residue histidine 61. At 78 to 92 the chain is on the cytoplasmic side; the sequence is WSWRRLKHMPETRFL. The chain crosses the membrane as a helical span at residues 93-113; that stretch reads AVISVFMIIFQGLLGAGAVVF. Residues 114–117 are Extracellular-facing; sequence GQSD. Residues 118 to 138 traverse the membrane as a helical segment; that stretch reads LIMALHFGFSALSFASVVLLT. Histidine 123 is a binding site for heme o. At 139 to 159 the chain is on the cytoplasmic side; the sequence is RLAFEDSNPQKQYAPIVSKAY. The chain crosses the membrane as a helical span at residues 160–180; it reads KGYVIFVAIYSYVAIYTGAYV. At 181-215 the chain is on the extracellular side; it reads KHTNATLACSGFPLCNGQWVPDVFTEAIGVQLLHR. An intrachain disulfide couples cysteine 189 to cysteine 195. Histidine 214 lines the heme b pocket. Residues 216–236 form a helical membrane-spanning segment; that stretch reads SAAILLSLLLLVLFIWTVKTF. Residues 237 to 240 lie on the Cytoplasmic side of the membrane; that stretch reads RASR. Residues 241–261 form a helical membrane-spanning segment; that stretch reads VLVVCASLAMLLVIGQAASGV. Over 262 to 274 the chain is Extracellular; it reads AVVLTYNATLTLG. The chain crosses the membrane as a helical span at residues 275–295; it reads IFHALLISLLFTLLCYMVMLV. Histidine 277 provides a ligand contact to heme b. Residues 296-301 are Cytoplasmic-facing; that stretch reads TRHKAK.

It belongs to the COX15/CtaA family. Type 1 subfamily. In terms of assembly, interacts with CtaB. Requires heme b as cofactor.

It is found in the cell membrane. It carries out the reaction Fe(II)-heme o + 2 A + H2O = Fe(II)-heme a + 2 AH2. It functions in the pathway porphyrin-containing compound metabolism; heme A biosynthesis; heme A from heme O: step 1/1. Functionally, catalyzes the conversion of heme O to heme A by two successive hydroxylations of the methyl group at C8. The first hydroxylation forms heme I, the second hydroxylation results in an unstable dihydroxymethyl group, which spontaneously dehydrates, resulting in the formyl group of heme A. The polypeptide is Heme A synthase (Shouchella clausii (strain KSM-K16) (Alkalihalobacillus clausii)).